Consider the following 401-residue polypeptide: O-antigen ligase (401 aa).

The Cytoplasmic portion of the chain corresponds to 1-20 (MFAATRLSRLRHDTSRILSH). A helical membrane pass occupies residues 21–37 (WILPLGWLALLTGMFWV). Topologically, residues 38 to 42 (GDRSD) are periplasmic. A helical membrane pass occupies residues 43–61 (YHRLFYILLAAPTLLYVIL). Residues 62 to 72 (QPRLLRPLTGS) lie on the Cytoplasmic side of the membrane. The chain crosses the membrane as a helical span at residues 73–92 (PLFIAFLAFSSYMMLSLSWS). At 93–103 (TPENSTGSLLK) the chain is on the periplasmic side. A helical transmembrane segment spans residues 104–122 (RPLYIALLFFCAAILALEA). Residues 123 to 129 (PLRLKTA) are Cytoplasmic-facing. A helical transmembrane segment spans residues 130–150 (TWLAALGAVISAAATLLRYYW). Residues 151-161 (DANPLRLTGYG) lie on the Periplasmic side of the membrane. A helical transmembrane segment spans residues 162-183 (ALYNPLLSAHVYGAFTALWLAY). Residues 184–189 (WMQSRP) lie on the Cytoplasmic side of the membrane. Residues 190–208 (ILAPLPLISLALLGGLLIA) form a helical membrane-spanning segment. At 209–212 (TGSR) the chain is on the periplasmic side. Residues 213–229 (TPLVGLTAALMWLVLAG) traverse the membrane as a helical segment. Residues 230–234 (DRKKA) lie on the Cytoplasmic side of the membrane. A helical transmembrane segment spans residues 235–252 (LIALALALAGALLGYILY). Residues 253-306 (PEVITQRGASFRPEIWADALRQISEHPWLGHGYDHPMRIVLSNGMLLADPHNIE) are Periplasmic-facing. Residues 258 to 319 (QRGASFRPEI…LFAGGIIGLL (62 aa)) are WZY-C. A helical transmembrane segment spans residues 307-331 (LGVLFAGGIIGLLLWVAIYALAFGF). The Cytoplasmic portion of the chain corresponds to 332–339 (SWKNRKSP). A helical membrane pass occupies residues 340–357 (AVLLASTWLVFGLAAGLT). Over 358–368 (EGNAFLPRPKE) the chain is Periplasmic. A helical membrane pass occupies residues 369 to 385 (HWFLIWIPMALLYALWI). Residues 386 to 401 (QQRFAASRRGEDIAAP) lie on the Cytoplasmic side of the membrane.

This sequence belongs to the O-antigen ligase family. As to quaternary structure, homodimer.

Its subcellular location is the cell inner membrane. It catalyses the reaction a lipid-linked O antigen + a lipid A-core oligosaccharide = a lipopolysaccharide + a polyisoprenyl diphosphate.. It participates in bacterial outer membrane biogenesis; lipopolysaccharide biosynthesis. Activity does not require ATP and magnesium ions. Functionally, transferase involved in the biosynthesis of the lipopolysaccharide (LPS). Catalyzes the transfer of a polymerized O-antigen molecule from its polyprenyl diphosphate membrane anchor to a terminal sugar of the lipid A-core oligosaccharide, finalizing the biosynthesis of the lipopolysaccharide. Required for the attachment of both A-band and B-band O-antigens, two forms of O-antigen produced by P.aeruginosa, onto the lipid A-core receptors. Important for cell wall integrity and motility of the bacteria. This Pseudomonas aeruginosa (strain ATCC 15692 / DSM 22644 / CIP 104116 / JCM 14847 / LMG 12228 / 1C / PRS 101 / PAO1) protein is O-antigen ligase.